A 40-amino-acid chain; its full sequence is Fibrinolytic protease (40 aa).

Residues 1–40 form the Peptidase S1 domain; that stretch reads IVGGNEVTPHAYPWQVGLFIDDMYFCGGSISVTLTGWGKP.

The protein belongs to the peptidase S1 family.

The protein resides in the secreted. It localises to the extracellular space. Serine protease with fibrinolytic activity. This is Fibrinolytic protease from Euphausia superba (Antarctic krill).